Consider the following 342-residue polypeptide: Uroporphyrinogen decarboxylase (342 aa).

Residues 24 to 28 (RQAGR), aspartate 74, tyrosine 149, serine 204, and histidine 319 each bind substrate.

It belongs to the uroporphyrinogen decarboxylase family. As to quaternary structure, homodimer.

It is found in the cytoplasm. It carries out the reaction uroporphyrinogen III + 4 H(+) = coproporphyrinogen III + 4 CO2. The protein operates within porphyrin-containing compound metabolism; protoporphyrin-IX biosynthesis; coproporphyrinogen-III from 5-aminolevulinate: step 4/4. Catalyzes the decarboxylation of four acetate groups of uroporphyrinogen-III to yield coproporphyrinogen-III. In Chelativorans sp. (strain BNC1), this protein is Uroporphyrinogen decarboxylase.